The chain runs to 426 residues: Probable glucose-6-phosphate isomerase (426 aa).

Glutamate 272 functions as the Proton donor in the catalytic mechanism. Catalysis depends on residues histidine 293 and lysine 404.

This sequence belongs to the GPI family.

The protein resides in the cytoplasm. The catalysed reaction is alpha-D-glucose 6-phosphate = beta-D-fructose 6-phosphate. Its pathway is carbohydrate biosynthesis; gluconeogenesis. It participates in carbohydrate degradation; glycolysis; D-glyceraldehyde 3-phosphate and glycerone phosphate from D-glucose: step 2/4. In terms of biological role, catalyzes the reversible isomerization of glucose-6-phosphate to fructose-6-phosphate. This Halobacterium salinarum (strain ATCC 700922 / JCM 11081 / NRC-1) (Halobacterium halobium) protein is Probable glucose-6-phosphate isomerase.